Reading from the N-terminus, the 66-residue chain is Large ribosomal subunit protein uL29 (66 aa).

It belongs to the universal ribosomal protein uL29 family.

The polypeptide is Large ribosomal subunit protein uL29 (Ruegeria sp. (strain TM1040) (Silicibacter sp.)).